The chain runs to 213 residues: Translation initiation factor IF-3 (213 aa).

The tract at residues 178–213 (VKTLIKSEKPEKPEKPEKSEKTEKQGPSTPPAPSAS) is disordered. The span at 182-201 (IKSEKPEKPEKPEKSEKTEK) shows a compositional bias: basic and acidic residues.

This sequence belongs to the IF-3 family. Monomer.

Its subcellular location is the cytoplasm. Its function is as follows. IF-3 binds to the 30S ribosomal subunit and shifts the equilibrium between 70S ribosomes and their 50S and 30S subunits in favor of the free subunits, thus enhancing the availability of 30S subunits on which protein synthesis initiation begins. The chain is Translation initiation factor IF-3 from Solibacter usitatus (strain Ellin6076).